We begin with the raw amino-acid sequence, 478 residues long: Ninja-family protein 7 (478 aa).

Disordered regions lie at residues 1–247 (MDDD…LTPG), 336–374 (SFTA…EKKA), and 454–478 (DAPA…SAEN). Residues 23 to 35 (KARDAPLEPKAEP) show a composition bias toward basic and acidic residues. Polar residues predominate over residues 169-179 (ISISTDDGSTG). Acidic residues predominate over residues 180–189 (ENEDVAESEA). Over residues 233–242 (SFSGSESSSG) the composition is skewed to low complexity. The span at 339–359 (AKDKADQTGTKQVDDGKKPRE) shows a compositional bias: basic and acidic residues.

Belongs to the Ninja family.

The protein resides in the nucleus. In Zea mays (Maize), this protein is Ninja-family protein 7.